Here is a 208-residue protein sequence, read N- to C-terminus: Small ribosomal subunit protein uS4 (208 aa).

The region spanning 98–161 (QRLDNVVYRM…KNNPQIVRAI (64 aa)) is the S4 RNA-binding domain.

This sequence belongs to the universal ribosomal protein uS4 family. As to quaternary structure, part of the 30S ribosomal subunit. Contacts protein S5. The interaction surface between S4 and S5 is involved in control of translational fidelity.

One of the primary rRNA binding proteins, it binds directly to 16S rRNA where it nucleates assembly of the body of the 30S subunit. Its function is as follows. With S5 and S12 plays an important role in translational accuracy. This Campylobacter concisus (strain 13826) protein is Small ribosomal subunit protein uS4.